The chain runs to 220 residues: Protein-L-isoaspartate O-methyltransferase (220 aa).

Ser-68 is a catalytic residue.

This sequence belongs to the methyltransferase superfamily. L-isoaspartyl/D-aspartyl protein methyltransferase family.

It is found in the cytoplasm. The catalysed reaction is [protein]-L-isoaspartate + S-adenosyl-L-methionine = [protein]-L-isoaspartate alpha-methyl ester + S-adenosyl-L-homocysteine. Catalyzes the methyl esterification of L-isoaspartyl residues in peptides and proteins that result from spontaneous decomposition of normal L-aspartyl and L-asparaginyl residues. It plays a role in the repair and/or degradation of damaged proteins. In Dictyoglomus thermophilum (strain ATCC 35947 / DSM 3960 / H-6-12), this protein is Protein-L-isoaspartate O-methyltransferase.